We begin with the raw amino-acid sequence, 392 residues long: Formate-dependent phosphoribosylglycinamide formyltransferase (392 aa).

N(1)-(5-phospho-beta-D-ribosyl)glycinamide contacts are provided by residues 20–21 and Glu80; that span reads EL. ATP contacts are provided by residues Arg112, Lys153, 158–163, 193–196, and Glu201; these read SSGKGQ and EGFV. Positions 117–306 constitute an ATP-grasp domain; the sequence is RLAAETLGLP…EFALHVRAIL (190 aa). Mg(2+)-binding residues include Glu265 and Glu277. N(1)-(5-phospho-beta-D-ribosyl)glycinamide is bound by residues Asp284, Lys355, and 362–363; that span reads RR.

This sequence belongs to the PurK/PurT family. In terms of assembly, homodimer.

The catalysed reaction is N(1)-(5-phospho-beta-D-ribosyl)glycinamide + formate + ATP = N(2)-formyl-N(1)-(5-phospho-beta-D-ribosyl)glycinamide + ADP + phosphate + H(+). It functions in the pathway purine metabolism; IMP biosynthesis via de novo pathway; N(2)-formyl-N(1)-(5-phospho-D-ribosyl)glycinamide from N(1)-(5-phospho-D-ribosyl)glycinamide (formate route): step 1/1. Its function is as follows. Involved in the de novo purine biosynthesis. Catalyzes the transfer of formate to 5-phospho-ribosyl-glycinamide (GAR), producing 5-phospho-ribosyl-N-formylglycinamide (FGAR). Formate is provided by PurU via hydrolysis of 10-formyl-tetrahydrofolate. This Aeromonas hydrophila subsp. hydrophila (strain ATCC 7966 / DSM 30187 / BCRC 13018 / CCUG 14551 / JCM 1027 / KCTC 2358 / NCIMB 9240 / NCTC 8049) protein is Formate-dependent phosphoribosylglycinamide formyltransferase.